We begin with the raw amino-acid sequence, 509 residues long: Maturase K (509 aa).

It belongs to the intron maturase 2 family. MatK subfamily.

The protein resides in the plastid. It is found in the chloroplast. In terms of biological role, usually encoded in the trnK tRNA gene intron. Probably assists in splicing its own and other chloroplast group II introns. This is Maturase K from Clematis vitalba (Evergreen clematis).